A 151-amino-acid chain; its full sequence is Caveolin-3 (151 aa).

Topologically, residues 1–83 (MMAEERTDLE…RLLSTLLGVP (83 aa)) are cytoplasmic. Lys-38 is covalently cross-linked (Glycyl lysine isopeptide (Lys-Gly) (interchain with G-Cter in SUMO3)). The interval 64–114 (TFTVSKYWCYRLLSTLLGVPLALLWGFLFACISFCHIWAVVPCIKSYLIEI) is required for interaction with DAG1. Positions 84–104 (LALLWGFLFACISFCHIWAVV) form an intramembrane region, helical. The Cytoplasmic portion of the chain corresponds to 105-151 (PCIKSYLIEIQCISHIYSLCIRTFCNPVFAALGQVCSNIKVMLRKEV).

Belongs to the caveolin family. As to quaternary structure, homooligomer. Interacts with DYSF. Interacts with DLG1 and KCNA5; forms a ternary complex. Interacts with DAG1 (via its C-terminal); the interaction prevents binding of DAG1 with DMD. Interacts with TRIM72. Interacts with MUSK; may regulate MUSK signaling. Interacts with POPDC1. Interacts with CAVIN1, CAVIN2 and CAVIN4. Sumoylation with SUMO3 by PIAS4 may reduce agonist-induced internalization and desensitization of adrenergic receptor ABRD2. As to expression, expressed specifically in skeletal muscle and heart.

It localises to the golgi apparatus membrane. The protein localises to the cell membrane. The protein resides in the membrane. Its subcellular location is the caveola. It is found in the sarcolemma. Functionally, may act as a scaffolding protein within caveolar membranes. Interacts directly with G-protein alpha subunits and can functionally regulate their activity. May also regulate voltage-gated potassium channels. Plays a role in the sarcolemma repair mechanism of both skeletal muscle and cardiomyocytes that permits rapid resealing of membranes disrupted by mechanical stress. Mediates the recruitment of CAVIN2 and CAVIN3 proteins to the caveolae. This chain is Caveolin-3 (CAV3), found in Sus scrofa (Pig).